Consider the following 199-residue polypeptide: Peptidyl-tRNA hydrolase (199 aa).

Tyr15 contributes to the tRNA binding site. His20 functions as the Proton acceptor in the catalytic mechanism. Positions 66, 68, and 114 each coordinate tRNA.

This sequence belongs to the PTH family. Monomer.

The protein resides in the cytoplasm. The enzyme catalyses an N-acyl-L-alpha-aminoacyl-tRNA + H2O = an N-acyl-L-amino acid + a tRNA + H(+). Hydrolyzes ribosome-free peptidyl-tRNAs (with 1 or more amino acids incorporated), which drop off the ribosome during protein synthesis, or as a result of ribosome stalling. Functionally, catalyzes the release of premature peptidyl moieties from peptidyl-tRNA molecules trapped in stalled 50S ribosomal subunits, and thus maintains levels of free tRNAs and 50S ribosomes. The polypeptide is Peptidyl-tRNA hydrolase (Burkholderia cenocepacia (strain ATCC BAA-245 / DSM 16553 / LMG 16656 / NCTC 13227 / J2315 / CF5610) (Burkholderia cepacia (strain J2315))).